Here is a 262-residue protein sequence, read N- to C-terminus: Serine/arginine-rich SC35-like splicing factor SCL30 (262 aa).

Over residues 1 to 14 (MRRYSPPYYSPPRR) the composition is skewed to low complexity. 2 disordered regions span residues 1 to 48 (MRRY…SHGS) and 123 to 262 (ASES…VSPR). Phosphoserine occurs at positions 5, 10, and 22. The span at 31 to 42 (GYGGGGGGGGRR) shows a compositional bias: gly residues. Positions 47–125 (GSLLVRNIPL…REITVVVASE (79 aa)) constitute an RRM domain. Over residues 125–152 (ESRKRPEEMRVKTRTRSREPSGSRDRSH) the composition is skewed to basic and acidic residues. Basic residues predominate over residues 153–167 (GRSRSRSISRSRSPR). A phosphoserine mark is found at Ser-182, Ser-204, and Ser-206. Tyr-209 carries the post-translational modification Phosphotyrosine. A compositionally biased stretch (basic and acidic residues) spans 217 to 239 (PDRDRNGDNEIREKPGYEAEDRR). Residues 243-262 (RAVSRSPSGSRSRSVEVSPR) are compositionally biased toward low complexity. Phosphoserine is present on residues Ser-254, Ser-256, and Ser-260.

Belongs to the splicing factor SR family. SCL subfamily. Component of the spliceosome. Interacts with RS2Z33, CYP59, CYP63 and CYP95. Phosphorylated.

It localises to the nucleus speckle. Functionally, involved in intron recognition and spliceosome assembly. Probably active at the 5' splice sites. In Arabidopsis thaliana (Mouse-ear cress), this protein is Serine/arginine-rich SC35-like splicing factor SCL30 (SCL30).